The chain runs to 248 residues: Large ribosomal subunit protein uL30 (248 aa).

N-acetylmethionine is present on Met-1. A run of 4 repeats spans residues 7–18 (KKKKVPAVPETL), 19–30 (KKKRKNFAELKI), 31–42 (KRLRKKFAQKML), and 43–54 (RKARRKLIYEKA). Residues 7–54 (KKKKVPAVPETLKKKRKNFAELKIKRLRKKFAQKMLRKARRKLIYEKA) are 4 X 12 AA tandem repeats. Thr-17 carries the post-translational modification Phosphothreonine. An N6-acetyllysine modification is found at Lys-124. Lys-127 carries the N6-succinyllysine modification. Tyr-139 is subject to Phosphotyrosine.

The protein belongs to the universal ribosomal protein uL30 family. In terms of assembly, component of the large ribosomal subunit. Homodimer. Interacts with DHX33.

The protein resides in the cytoplasm. Functionally, component of the large ribosomal subunit. The ribosome is a large ribonucleoprotein complex responsible for the synthesis of proteins in the cell. Binds to G-rich structures in 28S rRNA and in mRNAs. Plays a regulatory role in the translation apparatus; inhibits cell-free translation of mRNAs. This is Large ribosomal subunit protein uL30 (RPL7) from Bos taurus (Bovine).